Reading from the N-terminus, the 376-residue chain is Tetraacyldisaccharide 4'-kinase (376 aa).

An ATP-binding site is contributed by 51-58 (AVGGTGKT).

It belongs to the LpxK family.

It carries out the reaction a lipid A disaccharide + ATP = a lipid IVA + ADP + H(+). It functions in the pathway glycolipid biosynthesis; lipid IV(A) biosynthesis; lipid IV(A) from (3R)-3-hydroxytetradecanoyl-[acyl-carrier-protein] and UDP-N-acetyl-alpha-D-glucosamine: step 6/6. Functionally, transfers the gamma-phosphate of ATP to the 4'-position of a tetraacyldisaccharide 1-phosphate intermediate (termed DS-1-P) to form tetraacyldisaccharide 1,4'-bis-phosphate (lipid IVA). In Bacteroides fragilis (strain YCH46), this protein is Tetraacyldisaccharide 4'-kinase.